The following is a 427-amino-acid chain: 3-phosphoshikimate 1-carboxyvinyltransferase (427 aa).

3-phosphoshikimate contacts are provided by Lys22, Ser23, and Arg27. Lys22 lines the phosphoenolpyruvate pocket. Gly93 and Arg122 together coordinate phosphoenolpyruvate. 3-phosphoshikimate-binding residues include Ser167, Gln169, Asp315, and Lys342. Gln169 provides a ligand contact to phosphoenolpyruvate. Asp315 acts as the Proton acceptor in catalysis. Phosphoenolpyruvate contacts are provided by Arg346 and Arg387.

Belongs to the EPSP synthase family. As to quaternary structure, monomer.

It is found in the cytoplasm. The enzyme catalyses 3-phosphoshikimate + phosphoenolpyruvate = 5-O-(1-carboxyvinyl)-3-phosphoshikimate + phosphate. It functions in the pathway metabolic intermediate biosynthesis; chorismate biosynthesis; chorismate from D-erythrose 4-phosphate and phosphoenolpyruvate: step 6/7. In terms of biological role, catalyzes the transfer of the enolpyruvyl moiety of phosphoenolpyruvate (PEP) to the 5-hydroxyl of shikimate-3-phosphate (S3P) to produce enolpyruvyl shikimate-3-phosphate and inorganic phosphate. The polypeptide is 3-phosphoshikimate 1-carboxyvinyltransferase (Thermus thermophilus (strain ATCC BAA-163 / DSM 7039 / HB27)).